Here is a 164-residue protein sequence, read N- to C-terminus: Phosphopantetheine adenylyltransferase (164 aa).

Serine 9 is a substrate binding site. ATP-binding positions include 9–10 and histidine 17; that span reads SF. 3 residues coordinate substrate: lysine 41, leucine 73, and lysine 87. Residues 88-90, glutamate 98, and 123-129 contribute to the ATP site; these read GLR and YSYISSS.

This sequence belongs to the bacterial CoaD family. Homohexamer. It depends on Mg(2+) as a cofactor.

The protein resides in the cytoplasm. It carries out the reaction (R)-4'-phosphopantetheine + ATP + H(+) = 3'-dephospho-CoA + diphosphate. It functions in the pathway cofactor biosynthesis; coenzyme A biosynthesis; CoA from (R)-pantothenate: step 4/5. Its function is as follows. Reversibly transfers an adenylyl group from ATP to 4'-phosphopantetheine, yielding dephospho-CoA (dPCoA) and pyrophosphate. In Clostridium perfringens (strain ATCC 13124 / DSM 756 / JCM 1290 / NCIMB 6125 / NCTC 8237 / Type A), this protein is Phosphopantetheine adenylyltransferase.